We begin with the raw amino-acid sequence, 88 residues long: Pigment dispersing factor homolog pdf-1 (88 aa).

The first 21 residues, 1 to 21 (MNRFIISMIALLAVFCAVSTA), serve as a signal peptide directing secretion.

It is found in the secreted. In terms of biological role, probable ligand of isoforms a and b of the calcitonin receptor-like protein, pdfr-1, a G-protein coupled receptor. May not signal through isoform c of pdfr-1. Involved in locomotion; more specifically mate searching behavior of males, independent of nutritional status. Involved in regulating the male-specific expression of TGFbeta-like daf-7 in the ASJ chemosensory neurons. Plays a role in circadian rhythms of locomotor activity. Involved in mediating arousal from the sleep-like state called lethargus, which occurs during molting between larval and adult stages, in part by regulating touch sensitivity, and working in concert with neuropeptide flp-2. In the presence of food, plays a role in initiating and extending exploratory roaming behavior, in opposition to 5-hydroxytryptamine (serotonin) signaling. The polypeptide is Pigment dispersing factor homolog pdf-1 (Caenorhabditis elegans).